Consider the following 277-residue polypeptide: Pantothenate synthetase (277 aa).

26 to 33 (MGNLHEGH) is a binding site for ATP. Residue H33 is the Proton donor of the active site. Q57 serves as a coordination point for (R)-pantoate. Q57 is a binding site for beta-alanine. Position 144-147 (144-147 (GKKD)) interacts with ATP. A (R)-pantoate-binding site is contributed by Q150. ATP is bound by residues G173 and 181–184 (LSSR).

This sequence belongs to the pantothenate synthetase family. Homodimer.

The protein resides in the cytoplasm. The catalysed reaction is (R)-pantoate + beta-alanine + ATP = (R)-pantothenate + AMP + diphosphate + H(+). The protein operates within cofactor biosynthesis; (R)-pantothenate biosynthesis; (R)-pantothenate from (R)-pantoate and beta-alanine: step 1/1. Functionally, catalyzes the condensation of pantoate with beta-alanine in an ATP-dependent reaction via a pantoyl-adenylate intermediate. The sequence is that of Pantothenate synthetase from Chromobacterium violaceum (strain ATCC 12472 / DSM 30191 / JCM 1249 / CCUG 213 / NBRC 12614 / NCIMB 9131 / NCTC 9757 / MK).